The primary structure comprises 905 residues: Protein translocase subunit SecA (905 aa).

ATP-binding positions include Q87, 105-109 (GEGKT), and D512. Residues 565 to 584 (RRIDNQLRGRSGRQGDPGSS) form a disordered region. Zn(2+)-binding residues include C886, C888, C897, and H898.

The protein belongs to the SecA family. Monomer and homodimer. Part of the essential Sec protein translocation apparatus which comprises SecA, SecYEG and auxiliary proteins SecDF-YajC and YidC. It depends on Zn(2+) as a cofactor.

It localises to the cell inner membrane. The protein resides in the cytoplasm. The enzyme catalyses ATP + H2O + cellular proteinSide 1 = ADP + phosphate + cellular proteinSide 2.. Functionally, part of the Sec protein translocase complex. Interacts with the SecYEG preprotein conducting channel. Has a central role in coupling the hydrolysis of ATP to the transfer of proteins into and across the cell membrane, serving both as a receptor for the preprotein-SecB complex and as an ATP-driven molecular motor driving the stepwise translocation of polypeptide chains across the membrane. The chain is Protein translocase subunit SecA from Haemophilus ducreyi (strain 35000HP / ATCC 700724).